The primary structure comprises 583 residues: Dynein axonemal assembly factor 3 (583 aa).

The tract at residues 455–534 (RGGGDSAVES…RADQIPPLEA (80 aa)) is disordered.

It belongs to the DNAAF3 family.

It localises to the cytoplasm. The protein resides in the dynein axonemal particle. In terms of biological role, required for the assembly of axonemal inner and outer dynein arms. Involved in preassembly of dyneins into complexes before their transport into cilia. This Rattus norvegicus (Rat) protein is Dynein axonemal assembly factor 3 (Dnaaf3).